A 483-amino-acid polypeptide reads, in one-letter code: Glutamyl-tRNA(Gln) amidotransferase subunit A (483 aa).

Catalysis depends on charge relay system residues Lys-76 and Ser-151. Ser-175 (acyl-ester intermediate) is an active-site residue.

The protein belongs to the amidase family. GatA subfamily. Heterotrimer of A, B and C subunits.

It catalyses the reaction L-glutamyl-tRNA(Gln) + L-glutamine + ATP + H2O = L-glutaminyl-tRNA(Gln) + L-glutamate + ADP + phosphate + H(+). Its function is as follows. Allows the formation of correctly charged Gln-tRNA(Gln) through the transamidation of misacylated Glu-tRNA(Gln) in organisms which lack glutaminyl-tRNA synthetase. The reaction takes place in the presence of glutamine and ATP through an activated gamma-phospho-Glu-tRNA(Gln). This chain is Glutamyl-tRNA(Gln) amidotransferase subunit A, found in Nitrosococcus oceani (strain ATCC 19707 / BCRC 17464 / JCM 30415 / NCIMB 11848 / C-107).